Reading from the N-terminus, the 304-residue chain is Small ribosomal subunit protein uS3 (304 aa).

Residues 17–86 enclose the KH type-2 domain; the sequence is IDEFFAEELG…DPQVDVQEVD (70 aa). The segment at 216–304 is disordered; the sequence is LLEGEPEDSE…DEMDEEGDDE (89 aa).

This sequence belongs to the universal ribosomal protein uS3 family. As to quaternary structure, part of the 30S ribosomal subunit.

In terms of biological role, binds the lower part of the 30S subunit head. This is Small ribosomal subunit protein uS3 from Haloarcula marismortui (strain ATCC 43049 / DSM 3752 / JCM 8966 / VKM B-1809) (Halobacterium marismortui).